The primary structure comprises 460 residues: Diguanylate cyclase DosC (460 aa).

H98 serves as a coordination point for heme. The region spanning 325–458 (TPLSVLIIDV…GRNRVELWKA (134 aa)) is the GGDEF domain. D333 lines the Mg(2+) pocket. Positions 341 and 350 each coordinate substrate. A Mg(2+)-binding site is contributed by D376. Catalysis depends on D376, which acts as the Proton acceptor.

Heme serves as cofactor. Requires Mg(2+) as cofactor.

The enzyme catalyses 2 GTP = 3',3'-c-di-GMP + 2 diphosphate. The protein operates within purine metabolism; 3',5'-cyclic di-GMP biosynthesis. Globin-coupled heme-based oxygen sensor protein displaying diguanylate cyclase (DGC) activity in response to oxygen availability. Thus, catalyzes the synthesis of cyclic diguanylate (c-di-GMP) via the condensation of 2 GTP molecules. Cyclic-di-GMP is a second messenger which controls cell surface-associated traits in bacteria. The polypeptide is Diguanylate cyclase DosC (dosC) (Shigella boydii serotype 4 (strain Sb227)).